The following is a 946-amino-acid chain: Inter-alpha-trypsin inhibitor heavy chain H2 (946 aa).

The signal sequence occupies residues 1–18 (MQRPVCLLIWLFLLEAQA). The propeptide occupies 19–54 (FEIPINGNSEFAEYSDLVELAPDKLPFVQENGRHQR). Positions 56 to 185 (LPEESGEETD…KVQFELHYQE (130 aa)) constitute a VIT domain. Ser60 carries the phosphoserine modification. N-linked (GlcNAc...) asparagine glycosylation is found at Asn118 and Asn263. 4-carboxyglutamate is present on residues Glu282 and Glu283. Residues 308 to 468 (PKNILFVIDV…YDFLKRLSNE (161 aa)) enclose the VWFA domain. Residue Asn445 is glycosylated (N-linked (GlcNAc...) asparagine). The residue at position 466 (Ser466) is a Phosphoserine. An Aspartate 1-(chondroitin 4-sulfate)-ester modification is found at Asp702. The propeptide occupies 703-946 (PHFIIYLPKS…PQLYSFLKRP (244 aa)). The residue at position 886 (Ser886) is a Phosphoserine.

Belongs to the ITIH family. As to quaternary structure, I-alpha-I plasma protease inhibitors are assembled from one or two heavy chains (HC) and one light chain, bikunin. Inter-alpha-inhibitor (I-alpha-I) is composed of ITIH1/HC1, ITIH2/HC2 and bikunin. Post-translationally, heavy chains are linked to bikunin via chondroitin 4-sulfate esterified to the alpha-carboxyl of the C-terminal aspartate after propeptide cleavage. In terms of processing, phosphorylated by FAM20C in the extracellular medium. Expressed in both liver and brain.

It is found in the secreted. Functionally, may act as a carrier of hyaluronan in serum or as a binding protein between hyaluronan and other matrix protein, including those on cell surfaces in tissues to regulate the localization, synthesis and degradation of hyaluronan which are essential to cells undergoing biological processes. The sequence is that of Inter-alpha-trypsin inhibitor heavy chain H2 (Itih2) from Mus musculus (Mouse).